The following is a 99-amino-acid chain: Ferredoxin, vegetative (99 aa).

The 2Fe-2S ferredoxin-type domain occupies 4-96 (YQVRLINKKR…DCTIRTHQEP (93 aa)). The [2Fe-2S] cluster site is built by Cys42, Cys47, Cys50, and Cys80.

This sequence belongs to the 2Fe2S plant-type ferredoxin family. The cofactor is [2Fe-2S] cluster.

Ferredoxins are iron-sulfur proteins that transfer electrons in a wide variety of metabolic reactions. Donates electrons to the nitrogenase 2. The chain is Ferredoxin, vegetative (fdxH2) from Trichormus variabilis (strain ATCC 29413 / PCC 7937) (Anabaena variabilis).